A 347-amino-acid polypeptide reads, in one-letter code: 5-deoxyribose 1-phosphate isomerase (347 aa).

Substrate is bound by residues 48-50 (RGA), Arg91, and Gln198. Asp239 functions as the Proton donor in the catalytic mechanism. Position 249–250 (249–250 (NK)) interacts with substrate.

The protein belongs to the EIF-2B alpha/beta/delta subunits family. DrdI subfamily.

The enzyme catalyses 5-deoxy-alpha-D-ribose 1-phosphate = 5-deoxy-D-ribulose 1-phosphate. Its pathway is carbohydrate degradation. Its function is as follows. Catalyzes the isomerization of 5-deoxy-alpha-D-ribose 1-phosphate to 5-deoxy-D-ribulose 1-phosphate, as part of a 5-deoxyribose salvage pathway that recycles this toxic radical SAM enzyme by-product to mainstream metabolites. In Petrotoga mobilis (strain DSM 10674 / SJ95), this protein is 5-deoxyribose 1-phosphate isomerase.